A 362-amino-acid polypeptide reads, in one-letter code: 3-dehydroquinate synthase (362 aa).

NAD(+) is bound by residues 71–76 (DGEQYK), 105–109 (GVVGD), 129–130 (TT), K142, K151, and 169–172 (CLKT). Residues E184, H247, and H264 each coordinate Zn(2+).

It belongs to the sugar phosphate cyclases superfamily. Dehydroquinate synthase family. NAD(+) is required as a cofactor. It depends on Co(2+) as a cofactor. The cofactor is Zn(2+).

It localises to the cytoplasm. The catalysed reaction is 7-phospho-2-dehydro-3-deoxy-D-arabino-heptonate = 3-dehydroquinate + phosphate. The protein operates within metabolic intermediate biosynthesis; chorismate biosynthesis; chorismate from D-erythrose 4-phosphate and phosphoenolpyruvate: step 2/7. Catalyzes the conversion of 3-deoxy-D-arabino-heptulosonate 7-phosphate (DAHP) to dehydroquinate (DHQ). This Escherichia coli O157:H7 protein is 3-dehydroquinate synthase.